The primary structure comprises 334 residues: Ornithine carbamoyltransferase (334 aa).

Residues 57–60, glutamine 84, arginine 108, and 135–138 contribute to the carbamoyl phosphate site; these read STRT and HPTQ. L-ornithine is bound by residues asparagine 169, aspartate 233, and 237 to 238; that span reads SM. Carbamoyl phosphate is bound by residues 275–276 and arginine 320; that span reads CL.

Belongs to the aspartate/ornithine carbamoyltransferase superfamily. OTCase family.

It is found in the cytoplasm. The enzyme catalyses carbamoyl phosphate + L-ornithine = L-citrulline + phosphate + H(+). The protein operates within amino-acid biosynthesis; L-arginine biosynthesis; L-arginine from L-ornithine and carbamoyl phosphate: step 1/3. Functionally, reversibly catalyzes the transfer of the carbamoyl group from carbamoyl phosphate (CP) to the N(epsilon) atom of ornithine (ORN) to produce L-citrulline. This Vibrio campbellii (strain ATCC BAA-1116) protein is Ornithine carbamoyltransferase.